A 390-amino-acid polypeptide reads, in one-letter code: Neuromedin-B receptor (390 aa).

At 1–41 the chain is on the extracellular side; sequence MPPRSLSNLSFPTEANESELVPEVWEKDFLPDSDGTTAELV. Residues N8 and N16 are each glycosylated (N-linked (GlcNAc...) asparagine). The helical transmembrane segment at 42–65 threads the bilayer; the sequence is IRCVIPSLYLIIISVGLLGNIMLV. Residues 66–79 are Cytoplasmic-facing; that stretch reads KIFLTNSAMRNVPN. A helical membrane pass occupies residues 80-99; that stretch reads IFISNLAAGDLLLLLTCVPV. The Extracellular portion of the chain corresponds to 100-117; that stretch reads DASRYFFDEWVFGKLGCK. C116 and C198 are joined by a disulfide. Residues 118-139 form a helical membrane-spanning segment; sequence LIPAIQLTSVGVSVFTLTALSA. The Cytoplasmic portion of the chain corresponds to 140 to 156; sequence DRYRAIVNPMDMQTSGV. A helical transmembrane segment spans residues 157–177; it reads LLWTSLKAVGIWVVSVLLAVP. Over 178 to 211 the chain is Extracellular; sequence EAVFSEVARIGSLDNSSFTACIPYPQTDELHPKI. N-linked (GlcNAc...) asparagine glycosylation is present at N192. The chain crosses the membrane as a helical span at residues 212–235; the sequence is HSVLIFLVYFLIPLVIISIYYYHI. At 236-266 the chain is on the cytoplasmic side; sequence AKTLIKSAHNLPGEYNEHTKKQMETRKRLAK. Residues 267–287 form a helical membrane-spanning segment; the sequence is IVLVFVGCFVFCWFPNHVLYL. Over 288-299 the chain is Extracellular; sequence YRSFNYKEIDPS. A helical membrane pass occupies residues 300-327; the sequence is LGHMIVTLVARVLSFSNSCVNPFALYLL. At 328-390 the chain is on the cytoplasmic side; it reads SESFRKHFNS…GHSTKQEIAL (63 aa). C341 is lipidated: S-palmitoyl cysteine. S352 carries the post-translational modification Phosphoserine.

It belongs to the G-protein coupled receptor 1 family. As to expression, expressed in a subset of neurons of the pre-Botzinger complex. Within the pre-Botzinger complex, there is some overlap with neurons expressing Grpr with some cells expressing only Grpr or Nmbr while some cells express both. Expressed in dorsal root ganglion neurons and mast cells. Expressed in lung.

It localises to the cell membrane. Functionally, receptor for neuromedin-B. Contributes to the maintenance of basal sigh rate through signaling in the pre-Botzinger complex, a cluster of several thousand neurons in the ventrolateral medulla responsible for inspiration during respiratory activity. Contributes to the induction of sneezing following exposure to chemical irritants or allergens which causes release of NMB by nasal sensory neurons and activation of NMBR-expressing neurons in the sneeze-evoking region of the brainstem. These in turn activate neurons of the caudal ventral respiratory group, giving rise to the sneezing response. Contributes to induction of acute itch, possibly through its activation on dorsal root ganglion neurons by the NMB peptide. Plays a role in the innate immune response to influenza A virus infection by enhancing interferon alpha expression and reducing expression of IL6. Plays a role in CSF1-induced proliferation of osteoclast precursors by contributing to the positive regulation of the expression of the CSF1 receptor CSF1R. The sequence is that of Neuromedin-B receptor (Nmbr) from Mus musculus (Mouse).